Here is a 1732-residue protein sequence, read N- to C-terminus: Polycystin-1-like protein 3 (1732 aa).

The N-terminal stretch at 1–23 (MFFKGGSWLWLYIRTSIILGSEL) is a signal peptide. Over 24-697 (NSPAPHGQNN…IKLFLRVTNN (674 aa)) the chain is Extracellular. One can recognise a C-type lectin domain in the interval 30 to 138 (GQNNCYQLNR…CLLKYYFICQ (109 aa)). Disulfide bonds link C51–C137 and C112–C129. Residues N286, N363, N515, N537, and N575 are each glycosylated (N-linked (GlcNAc...) asparagine). A GAIN-B domain is found at 523–685 (TSLNMSTHQL…FVVPRTVNVE (163 aa)). 2 cysteine pairs are disulfide-bonded: C635-C663 and C650-C665. The tract at residues 635–685 (CYYWEIHNQTWSSAGCQVGPQSTILRTQCLCNHLTFFASDFFVVPRTVNVE) is GPS. Residues 698-718 (PVGVSLLASLLGFYVITVVWA) traverse the membrane as a helical segment. The Cytoplasmic segment spans residues 719 to 905 (RKKDQADMQK…PWNQFTRVQR (187 aa)). One can recognise a PLAT domain in the interval 743–860 (FHYLIQVYTG…GDCELDRVFI (118 aa)). A helical membrane pass occupies residues 906-926 (LSCCMTLLLCNMVINVMFWKI). Residues 927-939 (NSTTAKRDEQMRP) are Extracellular-facing. Residues 940 to 960 (FAVAWSELLVSIHTAVILFPI) traverse the membrane as a helical segment. The Cytoplasmic portion of the chain corresponds to 961–1154 (NLVIGRLFPL…ISNGLSKWLT (194 aa)). A helical membrane pass occupies residues 1155 to 1175 (SVCWLLLGFTSLASAFFTALY). Over 1176 to 1198 (SLELSKDQATSWMISIILSVLQN) the chain is Extracellular. The chain crosses the membrane as a helical span at residues 1199 to 1219 (IFISQPVKVVFFTFLYSLMMS). Topologically, residues 1220-1289 (RMPRLNKENE…KLTGDILVQI (70 aa)) are cytoplasmic. A helical membrane pass occupies residues 1290 to 1300 (LFLTLLMTAIY). Residues 1301–1461 (SAKNSNRFYL…SFTSLQMSKK (161 aa)) lie on the Extracellular side of the membrane. Residues 1462-1491 (GCVWSIISQVIYYLLVCYYAFIQGCQLKQQ) form a helical membrane-spanning segment. Over 1492–1500 (KWRFFTGKR) the chain is Cytoplasmic. The helical transmembrane segment at 1501–1519 (NILDTSIILISFILLGLDM) threads the bilayer. The Extracellular portion of the chain corresponds to 1520 to 1550 (KSISLHKKNMARYRDDQDRFISFYEAVKVNS). The chain crosses the membrane as a helical span at residues 1551-1572 (AATHLVGFPVLLATVQLWNLLR). The Cytoplasmic segment spans residues 1573–1589 (HSPRLRVISRTLSRAWD). Residues 1590–1614 (EVVGFLLIILILLTGYAIAFNLLFG) form a helical membrane-spanning segment. A channel pore-region region spans residues 1613–1651 (FGCSISDYRTFFSSAVTVVGLLMGISHQEEVFALDPVLG). Over 1615 to 1647 (CSISDYRTFFSSAVTVVGLLMGISHQEEVFALD) the chain is Extracellular. The helical transmembrane segment at 1648–1667 (PVLGTFLILTSVILMVLVVI) threads the bilayer. Residues 1668–1732 (NLFVSAILMA…SDTEVLDELP (65 aa)) lie on the Cytoplasmic side of the membrane.

This sequence belongs to the polycystin family. Heterotetramer with PKD2L1, composed of 3 subunit of PKD2L1 and 1 subunit of PKD1L3. Post-translationally, autoproteolytically processed at the GPS region of the GAIN-B domain; this cleavage modulates receptor activity. Highly expressed in placenta, weakly in heart and lung.

The protein localises to the cell membrane. It catalyses the reaction Ca(2+)(in) = Ca(2+)(out). The catalysed reaction is Na(+)(in) = Na(+)(out). The enzyme catalyses K(+)(in) = K(+)(out). It carries out the reaction Mg(2+)(in) = Mg(2+)(out). With respect to regulation, the non-selective cation channel is gated following an off-response property by acid: gated open after the removal of acid stimulus, but not during acid application. Regulation of non-selective cation channel activity by external Ca(2+) is bimodal, first sensitizing and subsequently inactivating the current. In terms of biological role, pore-forming subunit of a heterotetrameric, non-selective cation channel that is permeable to Ca(2+). Also shows permeability towards NA(1+), K(+) and Mg(2+). Heterotetrameric complex channel is activated by external low pH and Ca(2+), but opens only when the extracellular pH rises again and after the removal of acid stimulus. May act as a sour taste receptor in gustatory cells; however, its contribution to sour taste perception is unclear in vivo and may be indirect. This chain is Polycystin-1-like protein 3, found in Homo sapiens (Human).